We begin with the raw amino-acid sequence, 167 residues long: MDAAIGKVFDSVSDFFSGAASASADEFPLCDSDIISGCEKELAEAQDEGRKKECIMRLSWALVHSKMPSDIQRGIAMLEALVVNDTSAMKLREKLYLLALGYYRSGDFSRSRDCIERCLEVEPESGQAQALKKAIEDRIVKDGVIGVGIAVTAVGVVAGIAAAILRS.

A TPR repeat occupies 92-125 (REKLYLLALGYYRSGDFSRSRDCIERCLEVEPES). A helical membrane pass occupies residues 144–164 (VIGVGIAVTAVGVVAGIAAAI).

It belongs to the FIS1 family. In terms of assembly, interacts with PEX11A, PEX11B, PEX11C, PEX11D and PEX11E.

Its subcellular location is the mitochondrion outer membrane. The protein resides in the peroxisome membrane. In terms of biological role, component of the peroxisomal and mitochondrial division machineries. Plays a role in promoting the fission of mitochondria and peroxisomes. In association with PEX11C, PEX11D, PEX11E and DRP3A, is involved in cell cycle-associated constitutive self-replication of preexisting peroxisomes. The protein is Mitochondrial fission 1 protein B (FIS1B) of Arabidopsis thaliana (Mouse-ear cress).